The sequence spans 137 residues: MKVSPRRRARECAVQALYSWYVSQNSVEEVELSFVTDQDMNGVDLPYFRKLLRGTVLYVEAIDNDLRPFLDRAEDEVDPIERTILRLSAYELKYELDVPYKVVINEGIEVAKVFGSDDSHKYINGILDKLAPALGRK.

Belongs to the NusB family.

Its function is as follows. Involved in transcription antitermination. Required for transcription of ribosomal RNA (rRNA) genes. Binds specifically to the boxA antiterminator sequence of the ribosomal RNA (rrn) operons. This chain is Transcription antitermination protein NusB, found in Actinobacillus pleuropneumoniae serotype 5b (strain L20).